Reading from the N-terminus, the 1191-residue chain is WASH complex subunit homolog 5 (1191 aa).

This sequence belongs to the strumpellin family. Component of the WASH complex.

It is found in the early endosome. Functionally, acts at least in part as component of the WASH complex which may regulate wash nucleation-promoting factor (NPF) activity and is required for its membrane targeting during endosomal sorting. During embryogenesis, not involved in the wash-dependent developmental migration of hemocytes anteriorly from the tail. This Drosophila melanogaster (Fruit fly) protein is WASH complex subunit homolog 5.